Here is a 390-residue protein sequence, read N- to C-terminus: Aspartate carbamoyltransferase, chloroplastic (390 aa).

Residues 1 to 68 (MSIASSLTSA…NLTRNVGPVR (68 aa)) constitute a chloroplast transit peptide. Arg-136 and Thr-137 together coordinate carbamoyl phosphate. UMP contacts are provided by Arg-136 and Thr-137. Lys-166 is an L-aspartate binding site. Carbamoyl phosphate-binding residues include Arg-187, His-215, and Gln-218. Arg-187 and His-215 together coordinate UMP. Residues Arg-248 and Arg-310 each coordinate UMP. The L-aspartate site is built by Arg-248 and Arg-310. Residues Leu-350 and Pro-351 each contribute to the carbamoyl phosphate site.

The protein belongs to the aspartate/ornithine carbamoyltransferase superfamily. ATCase family. As to quaternary structure, homotrimer.

The protein localises to the plastid. It is found in the chloroplast. The catalysed reaction is carbamoyl phosphate + L-aspartate = N-carbamoyl-L-aspartate + phosphate + H(+). It participates in pyrimidine metabolism; UMP biosynthesis via de novo pathway; (S)-dihydroorotate from bicarbonate: step 2/3. Feedback inhibited by UMP. Its function is as follows. Catalyzes the condensation of carbamoyl phosphate and aspartate to form carbamoyl aspartate and inorganic phosphate, the committed step in the de novo pyrimidine nucleotide biosynthesis pathway. In Arabidopsis thaliana (Mouse-ear cress), this protein is Aspartate carbamoyltransferase, chloroplastic (PYRB).